A 370-amino-acid chain; its full sequence is Uroporphyrinogen decarboxylase (370 aa).

Substrate is bound by residues 29-33 (RQAGR), D79, Y155, S210, and H342.

This sequence belongs to the uroporphyrinogen decarboxylase family. In terms of assembly, homodimer.

Its subcellular location is the cytoplasm. The enzyme catalyses uroporphyrinogen III + 4 H(+) = coproporphyrinogen III + 4 CO2. Its pathway is porphyrin-containing compound metabolism; protoporphyrin-IX biosynthesis; coproporphyrinogen-III from 5-aminolevulinate: step 4/4. Its function is as follows. Catalyzes the decarboxylation of four acetate groups of uroporphyrinogen-III to yield coproporphyrinogen-III. This is Uroporphyrinogen decarboxylase from Variovorax paradoxus (strain S110).